A 103-amino-acid polypeptide reads, in one-letter code: Pyrimidine/purine nucleoside phosphorylase (103 aa).

This sequence belongs to the nucleoside phosphorylase PpnP family.

It carries out the reaction a purine D-ribonucleoside + phosphate = a purine nucleobase + alpha-D-ribose 1-phosphate. It catalyses the reaction adenosine + phosphate = alpha-D-ribose 1-phosphate + adenine. The catalysed reaction is cytidine + phosphate = cytosine + alpha-D-ribose 1-phosphate. The enzyme catalyses guanosine + phosphate = alpha-D-ribose 1-phosphate + guanine. It carries out the reaction inosine + phosphate = alpha-D-ribose 1-phosphate + hypoxanthine. It catalyses the reaction thymidine + phosphate = 2-deoxy-alpha-D-ribose 1-phosphate + thymine. The catalysed reaction is uridine + phosphate = alpha-D-ribose 1-phosphate + uracil. The enzyme catalyses xanthosine + phosphate = alpha-D-ribose 1-phosphate + xanthine. Catalyzes the phosphorolysis of diverse nucleosides, yielding D-ribose 1-phosphate and the respective free bases. Can use uridine, adenosine, guanosine, cytidine, thymidine, inosine and xanthosine as substrates. Also catalyzes the reverse reactions. The sequence is that of Pyrimidine/purine nucleoside phosphorylase from Shewanella sp. (strain ANA-3).